A 442-amino-acid polypeptide reads, in one-letter code: Tubulin beta chain (442 aa).

GTP contacts are provided by Q11, E69, S138, G142, T143, G144, N204, and N226. Position 69 (E69) interacts with Mg(2+). The interval 421 to 442 is disordered; that stretch reads EYQQYQDATAEDEEEMDEEQME. The segment covering 429–442 has biased composition (acidic residues); the sequence is TAEDEEEMDEEQME.

Belongs to the tubulin family. Dimer of alpha and beta chains. A typical microtubule is a hollow water-filled tube with an outer diameter of 25 nm and an inner diameter of 15 nM. Alpha-beta heterodimers associate head-to-tail to form protofilaments running lengthwise along the microtubule wall with the beta-tubulin subunit facing the microtubule plus end conferring a structural polarity. Microtubules usually have 13 protofilaments but different protofilament numbers can be found in some organisms and specialized cells. Mg(2+) serves as cofactor.

The protein localises to the cytoplasm. The protein resides in the cytoskeleton. In terms of biological role, tubulin is the major constituent of microtubules, a cylinder consisting of laterally associated linear protofilaments composed of alpha- and beta-tubulin heterodimers. Microtubules grow by the addition of GTP-tubulin dimers to the microtubule end, where a stabilizing cap forms. Below the cap, tubulin dimers are in GDP-bound state, owing to GTPase activity of alpha-tubulin. The protein is Tubulin beta chain (TUBB1) of Stylonychia lemnae (Ciliate).